Here is an 862-residue protein sequence, read N- to C-terminus: Protein SEY1 (862 aa).

At 1–743 the chain is on the cytoplasmic side; it reads MASNGHFSSV…KRSAIGGITQ (743 aa). The GB1/RHD3-type G domain maps to 48–301; that stretch reads GFNYHLISVF…IPADGFAVYA (254 aa). A GTP-binding site is contributed by 58 to 65; it reads GSQSTGKS. A coiled-coil region spans residues 476–500; sequence SDYKQELSLFQKDLEKISSQLRKDE. A helical membrane pass occupies residues 744-764; the sequence is VPLYFYGLLLALGWNEIIAVL. Residues 765 to 767 are Lumenal-facing; that stretch reads RNP. The chain crosses the membrane as a helical span at residues 768-788; that stretch reads IYFIFLLLIGVGAYVTFRLNL. The Cytoplasmic portion of the chain corresponds to 789–862; sequence WGPMINMAEA…TSDDDNDDDL (74 aa). A disordered region spans residues 818 to 862; sequence SDSGRQAMAMSGRNARGTEEYEMSSNLKSKGRRTDTSDDDNDDDL.

This sequence belongs to the TRAFAC class dynamin-like GTPase superfamily. GB1/RHD3 GTPase family. RHD3 subfamily.

It localises to the endoplasmic reticulum membrane. In terms of biological role, cooperates with the reticulon proteins and tubule-shaping DP1 family proteins to generate and maintain the structure of the tubular endoplasmic reticulum network. Has GTPase activity, which is required for its function in ER organization. This Arthroderma otae (strain ATCC MYA-4605 / CBS 113480) (Microsporum canis) protein is Protein SEY1.